The chain runs to 500 residues: Lysine--tRNA ligase (500 aa).

2 residues coordinate Mg(2+): Glu-410 and Glu-417.

Belongs to the class-II aminoacyl-tRNA synthetase family. As to quaternary structure, homodimer. Requires Mg(2+) as cofactor.

The protein localises to the cytoplasm. The catalysed reaction is tRNA(Lys) + L-lysine + ATP = L-lysyl-tRNA(Lys) + AMP + diphosphate. The sequence is that of Lysine--tRNA ligase from Shewanella frigidimarina (strain NCIMB 400).